A 462-amino-acid polypeptide reads, in one-letter code: MQLRKMQSIKKEQASLDAGTNVDKMMVLNSALTEVSEDLTTGEELLLNEGSVGKNKSSACRRKREFIPDEKKDAMYWEKRRKNNEAAKRSREKRRLNDLVLENKLIALGEENATLKAELLSLKLKFGLISSTAYAQEIQKLSNSTAVYFQDYQTSKSTVSAFVDEHEPSMVASSCISVIKHSPQSSLSDVSEVSSLEHSQEGPVQNGCRSPESKFQVIKQEPMELESYAREPRDDRGAYRGAVYQNYMGNSFPGYSHSPPLLQVNRSSSNSPRTSETDEGAVGKSSDGEDEQQVPKGPIHSPVELQRVHATVVKVPEVNSSALPHKLRIKAKAMQIKVEAFDHEFDGTQKLSSPVDMTSKRHFELEKHTTPNLVHSSLTPFSVQVTNIQDWSLKSEHWHQKELNGKTQSSFKTGVVEVKDSGYKVSDPENLFLKQGIANLSAEVVSLKRLIATHQISASDSG.

Lys24 participates in a covalent cross-link: Glycyl lysine isopeptide (Lys-Gly) (interchain with G-Cter in SUMO2). A bZIP domain is found at 73–136 (DAMYWEKRRK…GLISSTAYAQ (64 aa)). A basic motif region spans residues 79–95 (KRRKNNEAAKRSREKRR). The tract at residues 99 to 106 (LVLENKLI) is leucine-zipper. Disordered stretches follow at residues 189-236 (DVSE…RDDR) and 254-303 (GYSH…HSPV). Residue Lys214 forms a Glycyl lysine isopeptide (Lys-Gly) (interchain with G-Cter in SUMO2) linkage. A Glycyl lysine isopeptide (Lys-Gly) (interchain with G-Cter in SUMO1); alternate cross-link involves residue Lys219. Residue Lys219 forms a Glycyl lysine isopeptide (Lys-Gly) (interchain with G-Cter in SUMO2); alternate linkage. Residues 227 to 236 (SYAREPRDDR) are compositionally biased toward basic and acidic residues. Over residues 264–274 (VNRSSSNSPRT) the composition is skewed to polar residues. Ser301 bears the Phosphoserine mark. Glycyl lysine isopeptide (Lys-Gly) (interchain with G-Cter in SUMO2) cross-links involve residues Lys314, Lys326, Lys332, Lys337, and Lys350. Ser353 bears the Phosphoserine mark. Residues Lys360, Lys394, Lys401, Lys406, Lys412, Lys419, Lys424, Lys434, and Lys448 each participate in a glycyl lysine isopeptide (Lys-Gly) (interchain with G-Cter in SUMO2) cross-link.

It belongs to the bZIP family. NFIL3 subfamily. As to quaternary structure, homodimer. Binds DNA as a dimer. Interacts with CRY2, DR1 and PER2. Interacts with NR0B2. Interacts with MYSM1.

Its subcellular location is the nucleus. In terms of biological role, acts as a transcriptional regulator that recognizes and binds to the sequence 5'-[GA]TTA[CT]GTAA[CT]-3', a sequence present in many cellular and viral promoters. Represses transcription from promoters with activating transcription factor (ATF) sites. Represses promoter activity in osteoblasts. Represses transcriptional activity of PER1. Represses transcriptional activity of PER2 via the B-site on the promoter. Activates transcription from the interleukin-3 promoter in T-cells. Competes for the same consensus-binding site with PAR DNA-binding factors (DBP, HLF and TEF). Component of the circadian clock that acts as a negative regulator for the circadian expression of PER2 oscillation in the cell-autonomous core clock. Protects pro-B cells from programmed cell death. Represses the transcription of CYP2A5. Positively regulates the expression and activity of CES2 by antagonizing the repressive action of NR1D1 on CES2. Required for the development of natural killer cell precursors. This Bos taurus (Bovine) protein is Nuclear factor interleukin-3-regulated protein (NFIL3).